The following is a 325-amino-acid chain: Porphobilinogen deaminase (325 aa).

C253 is modified (S-(dipyrrolylmethanemethyl)cysteine).

It belongs to the HMBS family. It depends on dipyrromethane as a cofactor.

The enzyme catalyses 4 porphobilinogen + H2O = hydroxymethylbilane + 4 NH4(+). Its pathway is porphyrin-containing compound metabolism; protoporphyrin-IX biosynthesis; coproporphyrinogen-III from 5-aminolevulinate: step 2/4. Tetrapolymerization of the monopyrrole PBG into the hydroxymethylbilane pre-uroporphyrinogen in several discrete steps. The sequence is that of Porphobilinogen deaminase (hemC) from Dictyostelium discoideum (Social amoeba).